Consider the following 146-residue polypeptide: Envelope protein OPG155 (146 aa).

Residues Met1–Ile21 form a helical; Signal-anchor for type III membrane protein membrane-spanning segment. Topologically, residues Gln22 to Leu146 are intravirion.

It belongs to the orthopoxvirus OPG155 protein family. Part of a stable entry-fusion complex (EFC) which is at least composed of proteins OPG143, OPG147, OPG155, OPG086, OPG094, OPG107, OPG104, and OPG099. Formation of the viral membrane is necessary for the assembly of the complex. Interacts directly with protein OPG107. In terms of processing, contains two intramolecular disulfide bonds. They are created by the viral disulfide bond formation pathway, a poxvirus-specific pathway that operates on the cytoplasmic side of the MV membranes.

The protein resides in the virion membrane. In terms of biological role, envelope protein required for virus entry into host cell and for cell-cell fusion (syncytium formation). In Variola virus (isolate Human/India/Ind3/1967) (VARV), this protein is Envelope protein OPG155 (OPG155).